A 190-amino-acid chain; its full sequence is Protein GrpE (190 aa).

The interval 1 to 33 (MSEQEKDQNNAEPQVETVEEQQAAAAAEAVEPT) is disordered. The segment covering 11-32 (AEPQVETVEEQQAAAAAEAVEP) has biased composition (low complexity).

Belongs to the GrpE family. Homodimer.

It localises to the cytoplasm. Its function is as follows. Participates actively in the response to hyperosmotic and heat shock by preventing the aggregation of stress-denatured proteins, in association with DnaK and GrpE. It is the nucleotide exchange factor for DnaK and may function as a thermosensor. Unfolded proteins bind initially to DnaJ; upon interaction with the DnaJ-bound protein, DnaK hydrolyzes its bound ATP, resulting in the formation of a stable complex. GrpE releases ADP from DnaK; ATP binding to DnaK triggers the release of the substrate protein, thus completing the reaction cycle. Several rounds of ATP-dependent interactions between DnaJ, DnaK and GrpE are required for fully efficient folding. The sequence is that of Protein GrpE from Alcanivorax borkumensis (strain ATCC 700651 / DSM 11573 / NCIMB 13689 / SK2).